We begin with the raw amino-acid sequence, 380 residues long: Beta sliding clamp (380 aa).

This sequence belongs to the beta sliding clamp family. As to quaternary structure, forms a ring-shaped head-to-tail homodimer around DNA which binds and tethers DNA polymerases and other proteins to the DNA. The DNA replisome complex has a single clamp-loading complex (3 tau and 1 each of delta, delta', psi and chi subunits) which binds 3 Pol III cores (1 core on the leading strand and 2 on the lagging strand) each with a beta sliding clamp dimer. Additional proteins in the replisome are other copies of gamma, psi and chi, Ssb, DNA helicase and RNA primase.

The protein localises to the cytoplasm. Its function is as follows. Confers DNA tethering and processivity to DNA polymerases and other proteins. Acts as a clamp, forming a ring around DNA (a reaction catalyzed by the clamp-loading complex) which diffuses in an ATP-independent manner freely and bidirectionally along dsDNA. Initially characterized for its ability to contact the catalytic subunit of DNA polymerase III (Pol III), a complex, multichain enzyme responsible for most of the replicative synthesis in bacteria; Pol III exhibits 3'-5' exonuclease proofreading activity. The beta chain is required for initiation of replication as well as for processivity of DNA replication. This is Beta sliding clamp (dnaN) from Mycoplasma pneumoniae (strain ATCC 29342 / M129 / Subtype 1) (Mycoplasmoides pneumoniae).